Consider the following 357-residue polypeptide: DNA integrity scanning protein DisA (357 aa).

Positions valine 8–isoleucine 146 constitute a DAC domain. Residues glycine 75, leucine 93, and methionine 106 to threonine 110 contribute to the ATP site.

Belongs to the DisA family. In terms of assembly, homooctamer. The cofactor is Mg(2+).

The catalysed reaction is 2 ATP = 3',3'-c-di-AMP + 2 diphosphate. Participates in a DNA-damage check-point that is active prior to asymmetric division when DNA is damaged. DisA forms globular foci that rapidly scan along the chromosomes during sporulation, searching for lesions. When a lesion is present, DisA pauses at the lesion site. This triggers a cellular response that culminates in a temporary block in sporulation initiation. Functionally, also has diadenylate cyclase activity, catalyzing the condensation of 2 ATP molecules into cyclic di-AMP (c-di-AMP). c-di-AMP acts as a signaling molecule that couples DNA integrity with progression of sporulation. The rise in c-di-AMP level generated by DisA while scanning the chromosome, operates as a positive signal that advances sporulation; upon encountering a lesion, the DisA focus arrests at the damaged site and halts c-di-AMP synthesis. The chain is DNA integrity scanning protein DisA from Bacillus cereus (strain ATCC 14579 / DSM 31 / CCUG 7414 / JCM 2152 / NBRC 15305 / NCIMB 9373 / NCTC 2599 / NRRL B-3711).